We begin with the raw amino-acid sequence, 99 residues long: Large ribosomal subunit protein bL27 (99 aa).

Positions 1–9 (MLLMNLQLF) are excised as a propeptide.

This sequence belongs to the bacterial ribosomal protein bL27 family. Post-translationally, the N-terminus is cleaved by ribosomal processing cysteine protease Prp.

The sequence is that of Large ribosomal subunit protein bL27 from Clostridium novyi (strain NT).